Here is a 246-residue protein sequence, read N- to C-terminus: 1-(5-phosphoribosyl)-5-[(5-phosphoribosylamino)methylideneamino] imidazole-4-carboxamide isomerase (246 aa).

Residue Asp8 is the Proton acceptor of the active site. Residue Asp131 is the Proton donor of the active site.

The protein belongs to the HisA/HisF family.

The protein resides in the cytoplasm. It carries out the reaction 1-(5-phospho-beta-D-ribosyl)-5-[(5-phospho-beta-D-ribosylamino)methylideneamino]imidazole-4-carboxamide = 5-[(5-phospho-1-deoxy-D-ribulos-1-ylimino)methylamino]-1-(5-phospho-beta-D-ribosyl)imidazole-4-carboxamide. It participates in amino-acid biosynthesis; L-histidine biosynthesis; L-histidine from 5-phospho-alpha-D-ribose 1-diphosphate: step 4/9. This is 1-(5-phosphoribosyl)-5-[(5-phosphoribosylamino)methylideneamino] imidazole-4-carboxamide isomerase from Polaromonas naphthalenivorans (strain CJ2).